The following is a 519-amino-acid chain: Bifunctional purine biosynthesis protein PurH (519 aa).

An MGS-like domain is found at Met-1 to Val-147.

The protein belongs to the PurH family.

It carries out the reaction (6R)-10-formyltetrahydrofolate + 5-amino-1-(5-phospho-beta-D-ribosyl)imidazole-4-carboxamide = 5-formamido-1-(5-phospho-D-ribosyl)imidazole-4-carboxamide + (6S)-5,6,7,8-tetrahydrofolate. It catalyses the reaction IMP + H2O = 5-formamido-1-(5-phospho-D-ribosyl)imidazole-4-carboxamide. It functions in the pathway purine metabolism; IMP biosynthesis via de novo pathway; 5-formamido-1-(5-phospho-D-ribosyl)imidazole-4-carboxamide from 5-amino-1-(5-phospho-D-ribosyl)imidazole-4-carboxamide (10-formyl THF route): step 1/1. Its pathway is purine metabolism; IMP biosynthesis via de novo pathway; IMP from 5-formamido-1-(5-phospho-D-ribosyl)imidazole-4-carboxamide: step 1/1. In Trichlorobacter lovleyi (strain ATCC BAA-1151 / DSM 17278 / SZ) (Geobacter lovleyi), this protein is Bifunctional purine biosynthesis protein PurH.